Here is a 98-residue protein sequence, read N- to C-terminus: uncharacterized protein (98 aa).

The STAS domain maps to Met1–Met85.

Post-translationally, phosphorylated on threonine residue(s). Phosphorylated by PrkC and dephosphorylated by PrpC.

The protein localises to the cytoplasm. This is an uncharacterized protein from Bacillus subtilis (strain 168).